A 522-amino-acid chain; its full sequence is Protein nucleotidyltransferase YdiU (522 aa).

Residues glycine 109, glycine 111, arginine 112, lysine 132, aspartate 144, glycine 145, arginine 195, and arginine 202 each contribute to the ATP site. Aspartate 271 acts as the Proton acceptor in catalysis. Mg(2+)-binding residues include asparagine 272 and aspartate 281. ATP is bound at residue aspartate 281.

Belongs to the SELO family. Requires Mg(2+) as cofactor. Mn(2+) is required as a cofactor.

The enzyme catalyses L-seryl-[protein] + ATP = 3-O-(5'-adenylyl)-L-seryl-[protein] + diphosphate. It catalyses the reaction L-threonyl-[protein] + ATP = 3-O-(5'-adenylyl)-L-threonyl-[protein] + diphosphate. The catalysed reaction is L-tyrosyl-[protein] + ATP = O-(5'-adenylyl)-L-tyrosyl-[protein] + diphosphate. It carries out the reaction L-histidyl-[protein] + UTP = N(tele)-(5'-uridylyl)-L-histidyl-[protein] + diphosphate. The enzyme catalyses L-seryl-[protein] + UTP = O-(5'-uridylyl)-L-seryl-[protein] + diphosphate. It catalyses the reaction L-tyrosyl-[protein] + UTP = O-(5'-uridylyl)-L-tyrosyl-[protein] + diphosphate. Its function is as follows. Nucleotidyltransferase involved in the post-translational modification of proteins. It can catalyze the addition of adenosine monophosphate (AMP) or uridine monophosphate (UMP) to a protein, resulting in modifications known as AMPylation and UMPylation. This chain is Protein nucleotidyltransferase YdiU, found in Burkholderia ambifaria (strain MC40-6).